The following is a 206-amino-acid chain: Cytochrome c biogenesis ATP-binding export protein CcmA (206 aa).

An ABC transporter domain is found at 4–205 (LEGIDLTCIR…AGAAIQRLQL (202 aa)). 36–43 (GPNGSGKT) is an ATP binding site.

It belongs to the ABC transporter superfamily. CcmA exporter (TC 3.A.1.107) family. As to quaternary structure, the complex is composed of two ATP-binding proteins (CcmA) and two transmembrane proteins (CcmB).

The protein localises to the cell inner membrane. It carries out the reaction heme b(in) + ATP + H2O = heme b(out) + ADP + phosphate + H(+). In terms of biological role, part of the ABC transporter complex CcmAB involved in the biogenesis of c-type cytochromes; once thought to export heme, this seems not to be the case, but its exact role is uncertain. Responsible for energy coupling to the transport system. The polypeptide is Cytochrome c biogenesis ATP-binding export protein CcmA (Nitrosospira multiformis (strain ATCC 25196 / NCIMB 11849 / C 71)).